Reading from the N-terminus, the 503-residue chain is Cytochrome P450 11B1, mitochondrial (503 aa).

The N-terminal 24 residues, 1–24 (MALWAKARVWMAGPWLSLHRARPL), are a transit peptide targeting the mitochondrion. A heme-binding site is contributed by Cys-450.

This sequence belongs to the cytochrome P450 family. It depends on heme as a cofactor.

It localises to the mitochondrion inner membrane. The enzyme catalyses a steroid + 2 reduced [adrenodoxin] + O2 + 2 H(+) = an 11beta-hydroxysteroid + 2 oxidized [adrenodoxin] + H2O. It catalyses the reaction 11-deoxycortisol + 2 reduced [adrenodoxin] + O2 + 2 H(+) = cortisol + 2 oxidized [adrenodoxin] + H2O. It carries out the reaction 21-hydroxyprogesterone + 2 reduced [adrenodoxin] + O2 + 2 H(+) = corticosterone + 2 oxidized [adrenodoxin] + H2O. The catalysed reaction is corticosterone + 2 reduced [adrenodoxin] + O2 + 2 H(+) = 18-hydroxycorticosterone + 2 oxidized [adrenodoxin] + H2O. The enzyme catalyses 18-hydroxycorticosterone + 2 reduced [adrenodoxin] + O2 + 2 H(+) = aldosterone + 2 oxidized [adrenodoxin] + 2 H2O. It catalyses the reaction 21-hydroxyprogesterone + 2 reduced [adrenodoxin] + O2 + 2 H(+) = 19-hydroxy-11-deoxycorticosterone + 2 oxidized [adrenodoxin] + H2O. It carries out the reaction 19-hydroxy-11-deoxycorticosterone + 2 reduced [adrenodoxin] + O2 + 2 H(+) = 19-oxo-11-deoxycorticosterone + 2 oxidized [adrenodoxin] + 2 H2O. It functions in the pathway steroid biosynthesis; glucocorticoid biosynthesis. Its pathway is steroid hormone biosynthesis. Its function is as follows. A cytochrome P450 monooxygenase that catalyzes the biosynthesis of aldosterone and other adrenal corticoids. Differing from other species (such as human, rat and mice), it is able to catalyze three sequential oxidative reactions of 11-deoxycorticosterone (21-hydroxyprogesterone), namely 11-beta hydroxylation, followed by two successive oxidations at C18 yielding 18-hydroxy and then 18-oxo intermediates, and ending with the formation of aldosterone. Steroid 11beta, 18- and 19-hydroxylase. Mechanistically, uses molecular oxygen inserting one oxygen atom into a substrate and reducing the second into a water molecule. Two electrons are provided by NADPH via a two-protein mitochondrial transfer system comprising flavoprotein FDXR (adrenodoxin/ferredoxin reductase) and nonheme iron-sulfur protein FDX1 or FDX2 (adrenodoxin/ferredoxin). This is Cytochrome P450 11B1, mitochondrial (CYP11B1) from Ovis aries (Sheep).